The chain runs to 115 residues: NADH-ubiquinone oxidoreductase chain 3 (115 aa).

3 consecutive transmembrane segments (helical) span residues 5-25 (TALL…FWFF), 55-75 (FFLV…LLPL), and 86-106 (IMML…AYEW).

It belongs to the complex I subunit 3 family. In terms of assembly, core subunit of respiratory chain NADH dehydrogenase (Complex I) which is composed of 45 different subunits. Interacts with TMEM186. Interacts with TMEM242.

The protein resides in the mitochondrion inner membrane. It carries out the reaction a ubiquinone + NADH + 5 H(+)(in) = a ubiquinol + NAD(+) + 4 H(+)(out). Core subunit of the mitochondrial membrane respiratory chain NADH dehydrogenase (Complex I) which catalyzes electron transfer from NADH through the respiratory chain, using ubiquinone as an electron acceptor. Essential for the catalytic activity of complex I. This is NADH-ubiquinone oxidoreductase chain 3 from Peromyscus sejugis (Santa Cruz mouse).